We begin with the raw amino-acid sequence, 200 residues long: Small ribosomal subunit protein uS4 (200 aa).

Positions 94–157 (SRLDNLVFRA…QTSPQVKDAV (64 aa)) constitute an S4 RNA-binding domain.

This sequence belongs to the universal ribosomal protein uS4 family. Part of the 30S ribosomal subunit. Contacts protein S5. The interaction surface between S4 and S5 is involved in control of translational fidelity.

One of the primary rRNA binding proteins, it binds directly to 16S rRNA where it nucleates assembly of the body of the 30S subunit. Its function is as follows. With S5 and S12 plays an important role in translational accuracy. This chain is Small ribosomal subunit protein uS4, found in Metamycoplasma arthritidis (strain 158L3-1) (Mycoplasma arthritidis).